Here is an 893-residue protein sequence, read N- to C-terminus: Major vault protein (893 aa).

Ala2 is subject to N-acetylalanine. MVP repeat units follow at residues 2–56 (ATEE…VPPR), 57–111 (HYCT…DITP), 112–164 (LQVV…EIIQ), 165–217 (ATII…DLVD), 218–272 (AVIL…GVVP), 273–323 (ITTL…IQDV), 324–379 (YVLS…ERQA), 380–457 (IPLD…KTRV), and 458–520 (VSYR…LLGP). Lys444 is covalently cross-linked (Glycyl lysine isopeptide (Lys-Gly) (interchain with G-Cter in SUMO2)). The residue at position 445 (Ser445) is a Phosphoserine. A Glycyl lysine isopeptide (Lys-Gly) (interchain with G-Cter in SUMO2) cross-link involves residue Lys704. The segment at 856 to 893 (QPLGRRVASGPSPGEGISPQSAQAPQAPGDNHVVPVLR) is disordered.

The vault ribonucleoprotein particle is a huge (400 A x 670 A) cage structure of 12.9 MDa. It consists of a dimer of half-vaults, with each half-vault comprising 39 identical major vault protein (MVP) chains, PARP4 and one or more vault RNAs (vRNAs). Interacts with TEP1. Interacts with PTEN and activated MAPK1. The phosphorylated protein interacts with the SH2 domains of PTPN11 and SRC. Interacts with APEX1. May interact with ZNF540. In terms of processing, phosphorylated on Tyr residues after EGF stimulation. Post-translationally, dephosphorylated by PTPN11. As to expression, present in most normal tissues. Higher expression observed in epithelial cells with secretory and excretory functions, as well as in cells chronically exposed to xenobiotics, such as bronchial cells and cells lining the intestine. Overexpressed in many multidrug-resistant cancer cells.

It localises to the cytoplasm. Its subcellular location is the nucleus. The protein localises to the nuclear pore complex. The protein resides in the perinuclear region. Functionally, required for normal vault structure. Vaults are multi-subunit structures that may act as scaffolds for proteins involved in signal transduction. Vaults may also play a role in nucleo-cytoplasmic transport. Down-regulates IFNG-mediated STAT1 signaling and subsequent activation of JAK. Down-regulates SRC activity and signaling through MAP kinases. The protein is Major vault protein (MVP) of Homo sapiens (Human).